The following is a 494-amino-acid chain: Cobyric acid synthase (494 aa).

Positions 249 to 443 constitute a GATase cobBQ-type domain; the sequence is EINVTILRLP…LHGIFDNGAW (195 aa). Cys-330 acts as the Nucleophile in catalysis. His-435 is a catalytic residue.

It belongs to the CobB/CobQ family. CobQ subfamily.

Its pathway is cofactor biosynthesis; adenosylcobalamin biosynthesis. Catalyzes amidations at positions B, D, E, and G on adenosylcobyrinic A,C-diamide. NH(2) groups are provided by glutamine, and one molecule of ATP is hydrogenolyzed for each amidation. The chain is Cobyric acid synthase from Crocosphaera subtropica (strain ATCC 51142 / BH68) (Cyanothece sp. (strain ATCC 51142)).